Consider the following 156-residue polypeptide: Small ribosomal subunit protein uS7 (156 aa).

Belongs to the universal ribosomal protein uS7 family. In terms of assembly, part of the 30S ribosomal subunit. Contacts proteins S9 and S11.

One of the primary rRNA binding proteins, it binds directly to 16S rRNA where it nucleates assembly of the head domain of the 30S subunit. Is located at the subunit interface close to the decoding center, probably blocks exit of the E-site tRNA. This is Small ribosomal subunit protein uS7 from Bradyrhizobium diazoefficiens (strain JCM 10833 / BCRC 13528 / IAM 13628 / NBRC 14792 / USDA 110).